We begin with the raw amino-acid sequence, 354 residues long: Nicotinate-nucleotide--dimethylbenzimidazole phosphoribosyltransferase (354 aa).

Catalysis depends on Glu317, which acts as the Proton acceptor.

Belongs to the CobT family. Homodimer.

It catalyses the reaction 5,6-dimethylbenzimidazole + nicotinate beta-D-ribonucleotide = alpha-ribazole 5'-phosphate + nicotinate + H(+). Its pathway is nucleoside biosynthesis; alpha-ribazole biosynthesis; alpha-ribazole from 5,6-dimethylbenzimidazole: step 1/2. Catalyzes the synthesis of alpha-ribazole-5'-phosphate from nicotinate mononucleotide (NAMN) and 5,6-dimethylbenzimidazole (DMB). The protein is Nicotinate-nucleotide--dimethylbenzimidazole phosphoribosyltransferase of Salmonella arizonae (strain ATCC BAA-731 / CDC346-86 / RSK2980).